Reading from the N-terminus, the 236-residue chain is MILLVSPKDVAEAHEAIEGGADIIDVKNPPEGSLGANFPWVIKETREATPEGMLVSAAIGDVPYKPGTVTLAALGAAISGADYIKVGLYGTRSYQEALDVMKNVTKAVKDSGENKIVVAAGYADAYRVGGVDPLIIPRVARDAGCDVAMLDTAVKDGKTLFDHMSIELLKEFVEETHKYGMKCALAGSIKIEEIPMLKEINCDIVGVRGAACTKGDRNEGRIQKDLVKEIVKVCRQ.

Residue Lys-27 is the Schiff-base intermediate with substrate of the active site. Lys-85 acts as the Proton acceptor in catalysis.

The protein belongs to the MfnB family.

The catalysed reaction is 2 D-glyceraldehyde 3-phosphate = 4-(hydroxymethyl)-2-furancarboxaldehyde phosphate + phosphate + 2 H2O. Its pathway is cofactor biosynthesis; methanofuran biosynthesis. In terms of biological role, catalyzes the formation of 4-(hydroxymethyl)-2-furancarboxaldehyde phosphate (4-HFC-P) from two molecules of glyceraldehyde-3-P (GA-3-P). The polypeptide is (5-formylfuran-3-yl)methyl phosphate synthase (Methanococcus maripaludis (strain C7 / ATCC BAA-1331)).